Reading from the N-terminus, the 413-residue chain is MKIKQALFTAGYSSFYFDDQQAIKNGAGHDGFIYTGDPVTPGFTSVRQAGECVSVQLILENGAVAVGDCAAVQYSGAGGRDPLFLAEHFIPFLNDHIKPLLEGRDVDAFLPNARFFDKLRIDGNLLHTAVRYGLSQALLDATALASGRLKTEVVCDEWQLPCVPEAIPLFGQSGDDRYIAVDKMILKGVDVLPHALINNVEEKLGFKGEKLREYVRWLSDRILSLRSSPRYHPTLHIDVYGTIGLIFDMDPVRCAEYIASLEKEAQGLPLYIEGPVDAGNKPDQIRMLTAITKELTRLGSGVKIVADEWCNTYQDIVDFTDAGSCHMVQIKTPDLGGIHNIVDAVLYCNKHGMEAYQGGTCNETEISARTCVHVALAARPMRMLIKPGMGFDEGLNIVFNEMNRTIALLQTKD.

Gln172 is a (2S,3S)-3-methyl-L-aspartate binding site. Positions 238, 273, and 307 each coordinate Mg(2+). Residue Gln329 participates in (2S,3S)-3-methyl-L-aspartate binding. Lys331 acts as the Proton acceptor in catalysis. Position 360 to 361 (360 to 361 (TC)) interacts with (2S,3S)-3-methyl-L-aspartate.

Belongs to the methylaspartate ammonia-lyase family. Homodimer. Requires Mg(2+) as cofactor.

It catalyses the reaction (2S,3S)-3-methyl-L-aspartate = mesaconate + NH4(+). The protein operates within amino-acid degradation; L-glutamate degradation via mesaconate pathway; acetate and pyruvate from L-glutamate: step 2/4. Functionally, involved in the methylaspartate cycle. Catalyzes the formation of the alpha,beta-unsaturated bond by the reversible anti elimination of ammonia from L-threo-beta-methylaspartate (L-threo-(2S,3S)-3-methylaspartate) to give mesaconate. This chain is Methylaspartate ammonia-lyase, found in Citrobacter amalonaticus.